The following is a 340-amino-acid chain: L-galactonate-5-dehydrogenase (340 aa).

Zn(2+)-binding residues include Cys40, Cys65, Cys92, Cys95, Cys98, Cys106, and Glu146.

Belongs to the zinc-containing alcohol dehydrogenase family. Zn(2+) is required as a cofactor.

It catalyses the reaction L-galactonate + NAD(+) = keto-D-tagaturonate + NADH + H(+). Its activity is regulated as follows. Inhibited by EDTA. Functionally, catalyzes the oxidation of L-galactonate to D-tagaturonate. Required for growth on L-galactonate as the sole carbon source. In vitro, can also use L-gulonate. The chain is L-galactonate-5-dehydrogenase (lgoD) from Escherichia coli (strain K12).